The sequence spans 1256 residues: SNF2 domain-containing protein CLASSY 1 (1256 aa).

Disordered stretches follow at residues 269 to 290 (ELRRSKRRSGRPERYGDSEIQP) and 448 to 467 (GNVVHKRNGPHSRIRSVSRE). The span at 278–290 (GRPERYGDSEIQP) shows a compositional bias: basic and acidic residues. The span at 451 to 463 (VHKRNGPHSRIRS) shows a compositional bias: basic residues. Residues 699–898 (DPSSDKIGGC…FNTLCLARPK (200 aa)) enclose the Helicase ATP-binding domain. ATP is bound at residue 712–719 (HTPGAGKT). Residues 849–852 (DEGH) carry the DEAH box motif. The Helicase C-terminal domain occupies 1061–1222 (FVLNLVFRVV…EFVEDPSQWQ (162 aa)).

This sequence belongs to the helicase family. In terms of assembly, interacts with NRPD1, NRPD3 and SHH1.

Its subcellular location is the nucleus. The protein resides in the nucleoplasm. It is found in the nucleolus. Functionally, probable chromatin remodeling factor. Required for the initial establishment of DNA methylation and for accumulation of 24-nt siRNAs. May act on RNA templates by remodeling ribonucleoprotein structures and thereby influencing the availability of the RNA to polymerases. The polypeptide is SNF2 domain-containing protein CLASSY 1 (CLSY1) (Arabidopsis thaliana (Mouse-ear cress)).